The chain runs to 539 residues: Propionyl-CoA carboxylase beta chain, mitochondrial (539 aa).

Residues 1–28 (MAAAVRVTAARARLRVVVRSLHAGVRSL) constitute a mitochondrion transit peptide. In terms of domain architecture, CoA carboxyltransferase N-terminal spans 32-290 (PVSVNERIEN…SNQDPAPIRE (259 aa)). The interval 32–533 (PVSVNERIEN…SKKVQRPWRK (502 aa)) is carboxyltransferase. The residue at position 71 (S71) is a Phosphoserine. Residue K99 is modified to N6-acetyllysine; alternate. K99 carries the post-translational modification N6-succinyllysine; alternate. In terms of domain architecture, CoA carboxyltransferase C-terminal spans 294-533 (PSDRLVPELD…SKKVQRPWRK (240 aa)). The tract at residues 325-358 (DERDFFEIMPNYAKNIIVGFARMNGRTVGIVGNQ) is acyl-CoA binding. N6-acetyllysine; alternate occurs at positions 474 and 489. N6-succinyllysine; alternate is present on residues K474 and K489.

It belongs to the AccD/PCCB family. The holoenzyme is a dodecamer composed of 6 PCCA/alpha subunits and 6 PCCB/beta subunits.

The protein resides in the mitochondrion matrix. The enzyme catalyses propanoyl-CoA + hydrogencarbonate + ATP = (S)-methylmalonyl-CoA + ADP + phosphate + H(+). The catalysed reaction is butanoyl-CoA + hydrogencarbonate + ATP = (2S)-ethylmalonyl-CoA + ADP + phosphate + H(+). Its pathway is metabolic intermediate metabolism; propanoyl-CoA degradation; succinyl-CoA from propanoyl-CoA: step 1/3. Its function is as follows. This is one of the 2 subunits of the biotin-dependent propionyl-CoA carboxylase (PCC), a mitochondrial enzyme involved in the catabolism of odd chain fatty acids, branched-chain amino acids isoleucine, threonine, methionine, and valine and other metabolites. Propionyl-CoA carboxylase catalyzes the carboxylation of propionyl-CoA/propanoyl-CoA to D-methylmalonyl-CoA/(S)-methylmalonyl-CoA. Within the holoenzyme, the alpha subunit catalyzes the ATP-dependent carboxylation of the biotin carried by the biotin carboxyl carrier (BCC) domain, while the beta subunit then transfers the carboxyl group from carboxylated biotin to propionyl-CoA. Propionyl-CoA carboxylase also significantly acts on butyryl-CoA/butanoyl-CoA, which is converted to ethylmalonyl-CoA/(2S)-ethylmalonyl-CoA at a much lower rate. Other alternative minor substrates include (2E)-butenoyl-CoA/crotonoyl-CoA. This Sus scrofa (Pig) protein is Propionyl-CoA carboxylase beta chain, mitochondrial.